The chain runs to 426 residues: Serine--tRNA ligase (426 aa).

Thr-233–Glu-235 provides a ligand contact to L-serine. ATP is bound at residue Arg-264–Glu-266. Glu-287 contributes to the L-serine binding site. Glu-351 to Ser-354 contributes to the ATP binding site. Residue Ser-387 participates in L-serine binding.

It belongs to the class-II aminoacyl-tRNA synthetase family. Type-1 seryl-tRNA synthetase subfamily. In terms of assembly, homodimer. The tRNA molecule binds across the dimer.

It is found in the cytoplasm. The enzyme catalyses tRNA(Ser) + L-serine + ATP = L-seryl-tRNA(Ser) + AMP + diphosphate + H(+). It carries out the reaction tRNA(Sec) + L-serine + ATP = L-seryl-tRNA(Sec) + AMP + diphosphate + H(+). It functions in the pathway aminoacyl-tRNA biosynthesis; selenocysteinyl-tRNA(Sec) biosynthesis; L-seryl-tRNA(Sec) from L-serine and tRNA(Sec): step 1/1. In terms of biological role, catalyzes the attachment of serine to tRNA(Ser). Is also able to aminoacylate tRNA(Sec) with serine, to form the misacylated tRNA L-seryl-tRNA(Sec), which will be further converted into selenocysteinyl-tRNA(Sec). This Clostridium novyi (strain NT) protein is Serine--tRNA ligase.